Consider the following 373-residue polypeptide: Alcohol dehydrogenase 2 (373 aa).

Positions 47, 49, 69, 99, 102, 105, 113, and 177 each coordinate Zn(2+). Threonine 49 and histidine 69 together coordinate an alcohol. Residue threonine 49 participates in NAD(+) binding. NAD(+)-binding positions include 202–207, aspartate 226, lysine 231, threonine 272, phenylalanine 316, and arginine 366; that span reads GLGAVG.

Belongs to the zinc-containing alcohol dehydrogenase family. Homodimer. It depends on Zn(2+) as a cofactor.

The protein localises to the cytoplasm. It carries out the reaction a primary alcohol + NAD(+) = an aldehyde + NADH + H(+). The enzyme catalyses a secondary alcohol + NAD(+) = a ketone + NADH + H(+). The chain is Alcohol dehydrogenase 2 (ADH2) from Hordeum vulgare (Barley).